The chain runs to 350 residues: UDP-N-acetylenolpyruvoylglucosamine reductase (350 aa).

One can recognise an FAD-binding PCMH-type domain in the interval 24 to 195 (HVEATARWLL…VAVEFNLPLL (172 aa)). Arginine 172 is a catalytic residue. The active-site Proton donor is serine 245. Glutamate 342 is a catalytic residue.

It belongs to the MurB family. FAD is required as a cofactor.

The protein localises to the cytoplasm. It carries out the reaction UDP-N-acetyl-alpha-D-muramate + NADP(+) = UDP-N-acetyl-3-O-(1-carboxyvinyl)-alpha-D-glucosamine + NADPH + H(+). It functions in the pathway cell wall biogenesis; peptidoglycan biosynthesis. In terms of biological role, cell wall formation. The protein is UDP-N-acetylenolpyruvoylglucosamine reductase of Xanthomonas euvesicatoria pv. vesicatoria (strain 85-10) (Xanthomonas campestris pv. vesicatoria).